The sequence spans 366 residues: UDP-N-acetylenolpyruvoylglucosamine reductase (366 aa).

The FAD-binding PCMH-type domain maps to 27 to 197 (LGGPAAGFVV…LRVRFLLRDG (171 aa)). R175 is a catalytic residue. The active-site Proton donor is the S252. Residue E358 is part of the active site.

Belongs to the MurB family. The cofactor is FAD.

The protein localises to the cytoplasm. It catalyses the reaction UDP-N-acetyl-alpha-D-muramate + NADP(+) = UDP-N-acetyl-3-O-(1-carboxyvinyl)-alpha-D-glucosamine + NADPH + H(+). It functions in the pathway cell wall biogenesis; peptidoglycan biosynthesis. Functionally, cell wall formation. This chain is UDP-N-acetylenolpyruvoylglucosamine reductase, found in Saccharopolyspora erythraea (strain ATCC 11635 / DSM 40517 / JCM 4748 / NBRC 13426 / NCIMB 8594 / NRRL 2338).